The primary structure comprises 545 residues: ATP synthase subunit alpha (545 aa).

172-179 lines the ATP pocket; that stretch reads GDRKTGKT.

The protein belongs to the ATPase alpha/beta chains family. As to quaternary structure, F-type ATPases have 2 components, CF(1) - the catalytic core - and CF(0) - the membrane proton channel. CF(1) has five subunits: alpha(3), beta(3), gamma(1), delta(1), epsilon(1). CF(0) has three main subunits: a(1), b(2) and c(9-12). The alpha and beta chains form an alternating ring which encloses part of the gamma chain. CF(1) is attached to CF(0) by a central stalk formed by the gamma and epsilon chains, while a peripheral stalk is formed by the delta and b chains.

It localises to the cell membrane. The enzyme catalyses ATP + H2O + 4 H(+)(in) = ADP + phosphate + 5 H(+)(out). Functionally, produces ATP from ADP in the presence of a proton gradient across the membrane. The alpha chain is a regulatory subunit. The sequence is that of ATP synthase subunit alpha from Nocardia farcinica (strain IFM 10152).